Here is a 152-residue protein sequence, read N- to C-terminus: Transcriptional regulator MraZ (152 aa).

2 consecutive SpoVT-AbrB domains span residues 5–52 and 81–124; these read ATLV…PLPE and ASEC…DETT.

It belongs to the MraZ family. As to quaternary structure, forms oligomers.

The protein resides in the cytoplasm. Its subcellular location is the nucleoid. Negatively regulates its own expression and that of the subsequent genes in the proximal part of the division and cell wall (dcw) gene cluster. Acts by binding directly to DNA. May also regulate the expression of genes outside the dcw cluster. This Klebsiella pneumoniae subsp. pneumoniae (strain ATCC 700721 / MGH 78578) protein is Transcriptional regulator MraZ.